The sequence spans 90 residues: Auxin-responsive protein SAUR24 (90 aa).

This sequence belongs to the ARG7 family.

It is found in the cell membrane. Functions as a positive effector of cell expansion through modulation of auxin transport. In Arabidopsis thaliana (Mouse-ear cress), this protein is Auxin-responsive protein SAUR24.